Reading from the N-terminus, the 124-residue chain is Meiotically up-regulated gene 103 protein (124 aa).

It localises to the nucleus. The protein resides in the nucleolus. Has a role in meiosis. The sequence is that of Meiotically up-regulated gene 103 protein (mug103) from Schizosaccharomyces pombe (strain 972 / ATCC 24843) (Fission yeast).